The sequence spans 1320 residues: Myopalladin (1320 aa).

Positions 1 to 522 are interaction with CARP; it reads MQDDSIEAST…FTCTASNKYG (522 aa). Disordered regions lie at residues 19 to 68, 84 to 145, and 165 to 271; these read SYLA…AFLS, NYDP…SETQ, and FKSH…PPRF. Composition is skewed to basic and acidic residues over residues 23 to 35 and 87 to 106; these read ETRH…RSRA and PLEK…DQMK. A Phosphoserine modification is found at Ser101. Residues 107–130 show a composition bias toward polar residues; sequence HSPNLSFEPNFCQDNPRSPTSSKE. Phosphoserine is present on Ser131. The span at 168–182 shows a compositional bias: basic residues; that stretch reads HSSKRIRPRACKNHK. A compositionally biased stretch (polar residues) spans 186-201; it reads ESQNKVMQENSSSFSD. Over residues 218 to 239 the composition is skewed to basic and acidic residues; the sequence is DTRDNEVNHALEQQEAKRREAE. Residues 219–248 are a coiled coil; the sequence is TRDNEVNHALEQQEAKRREAEQAASEAAGG. Residues 240–258 show a composition bias toward low complexity; that stretch reads QAASEAAGGDTTPGSSPSS. Thr251 is subject to Phosphothreonine. Ig-like domains are found at residues 269-359 and 435-531; these read PRFT…IYIE and PVFT…AQLH. 2 disulfides stabilise this stretch: Cys290/Cys341 and Cys456/Cys515. The tract at residues 554–655 is disordered; that stretch reads AAIEPQPSPP…VKEPPPVLAK (102 aa). A compositionally biased stretch (pro residues) spans 559–575; that stretch reads QPSPPHSEPPSVEQPPK. Ser644 carries the post-translational modification Phosphoserine. An interaction with NEB region spans residues 649 to 677; sequence PPPVLAKPKLDSTQLQQLHNQVLLEQHQL. At Ser759 the chain carries Phosphoserine. A disordered region spans residues 763–805; it reads LLVSHPSVQTKSPGGLSIQNEPLPPGPTEPTPPPFTFSIPSGN. The span at 768-782 shows a compositional bias: polar residues; that stretch reads PSVQTKSPGGLSIQN. A compositionally biased stretch (pro residues) spans 784–797; the sequence is PLPPGPTEPTPPPF. A phosphoserine mark is found at Ser813, Ser818, Ser867, Ser907, and Ser928. Residues 844 to 876 are disordered; that stretch reads NAMGLPRSAPSMPSQGLAKKNTKSPQPVNDDNI. 3 consecutive Ig-like domains span residues 945–1029, 1073–1162, and 1172–1262; these read PIFD…GRIS, PHFL…LELS, and PVIL…ARLD. Residues 945 to 1320 form an interaction with ACTN region; it reads PIFDKRLKHF…SRSVVESDEL (376 aa). Cys1094 and Cys1146 are joined by a disulfide.

The protein belongs to the myotilin/palladin family. As to quaternary structure, interacts with TTN/titin, NEB, NEBL, ACTN2 and CARP. In terms of tissue distribution, expressed in adult skeletal muscle and fetal heart.

The protein resides in the cytoplasm. The protein localises to the nucleus. It localises to the myofibril. It is found in the sarcomere. Its subcellular location is the z line. Its function is as follows. Component of the sarcomere that tethers together nebulin (skeletal muscle) and nebulette (cardiac muscle) to alpha-actinin, at the Z lines. The chain is Myopalladin (MYPN) from Homo sapiens (Human).